We begin with the raw amino-acid sequence, 485 residues long: Eukaryotic translation initiation factor 3 subunit E (485 aa).

In terms of domain architecture, PCI spans 219–391; that stretch reads NQPDGPDGIV…GEIHITKPVT (173 aa). Residues 444-485 form a disordered region; sequence QGGGKSNKKGDYKKGDYKKGGDFKKGGDFKKGGDHKKRAWVK. Basic and acidic residues predominate over residues 451-475; the sequence is KKGDYKKGDYKKGGDFKKGGDFKKG. Basic residues predominate over residues 476–485; that stretch reads GDHKKRAWVK.

It belongs to the eIF-3 subunit E family. Component of the eukaryotic translation initiation factor 3 (eIF-3) complex.

The protein localises to the cytoplasm. Functionally, component of the eukaryotic translation initiation factor 3 (eIF-3) complex, which is involved in protein synthesis of a specialized repertoire of mRNAs and, together with other initiation factors, stimulates binding of mRNA and methionyl-tRNAi to the 40S ribosome. The eIF-3 complex specifically targets and initiates translation of a subset of mRNAs involved in cell proliferation. This is Eukaryotic translation initiation factor 3 subunit E from Monosiga brevicollis (Choanoflagellate).